A 60-amino-acid chain; its full sequence is Sec-independent protein translocase protein TatA (60 aa).

A helical membrane pass occupies residues 1–21 (MTPAGPAQLLIVALVVIVLFG).

This sequence belongs to the TatA/E family. The Tat system comprises two distinct complexes: a TatABC complex, containing multiple copies of TatA, TatB and TatC subunits, and a separate TatA complex, containing only TatA subunits. Substrates initially bind to the TatABC complex, which probably triggers association of the separate TatA complex to form the active translocon.

It localises to the cell membrane. Part of the twin-arginine translocation (Tat) system that transports large folded proteins containing a characteristic twin-arginine motif in their signal peptide across membranes. TatA could form the protein-conducting channel of the Tat system. This Corynebacterium glutamicum (strain R) protein is Sec-independent protein translocase protein TatA.